Consider the following 614-residue polypeptide: MPVYRSKTTTSGRNMAGARALWRATGMTDDDFQKPIIAVVNSFTQFVPGHVHLKDMGQLVAREIEAAGGVAKEFNTIAVDDGIAMGHDGMLYSLPSRDLIADSVEYMVNAHCADAMVCISNCDKITPGMLMAAMRINIPVIFVSGGPMEAGKTKLSENKLDLVDAMVIAADPTATDERVAEYERSACPTCGSCSGMFTANSMNCLTEALGLSLPGNGTTLATHSDRRRLFLDAGRRIVDITKRYYENDEANWAPRSIASFEAFENAMTLDIAMGGSTNTILHLLAIAREAGVDFSMEDIDRLSRKVPQLCKVAPNSPKYHVEDVHRAGGIFALLGELDRGGILHNQCHTVHSKTMLEALKSWDIMRSPTPEIIEFYKAGPAGIPTQTAFSQSTRWPSLDGDRAEGCIRSIENAFSLEGGLAVLYGNIAVDGCVVKSAGVDESILVFEGRAHVTESQDEAVKNILDDKVEAGDIVIVRYEGPKGGPGMQEMLYPTSYIKSKGLGKACALLTDGRFSGGTSGLSIGHVSPEAAAGGAIGLVENGDRILIDIPNRSINVLLSDEELAKRRAAMEAKGAAAWKPVEMRPRKVSPALKVYAHFATSADKGAVRDISQID.

Aspartate 81 is a Mg(2+) binding site. Residue cysteine 122 coordinates [2Fe-2S] cluster. 2 residues coordinate Mg(2+): aspartate 123 and lysine 124. At lysine 124 the chain carries N6-carboxylysine. Cysteine 193 provides a ligand contact to [2Fe-2S] cluster. Glutamate 489 is a Mg(2+) binding site. The active-site Proton acceptor is serine 515.

Belongs to the IlvD/Edd family. In terms of assembly, homodimer. It depends on [2Fe-2S] cluster as a cofactor. Mg(2+) is required as a cofactor.

It carries out the reaction (2R)-2,3-dihydroxy-3-methylbutanoate = 3-methyl-2-oxobutanoate + H2O. The enzyme catalyses (2R,3R)-2,3-dihydroxy-3-methylpentanoate = (S)-3-methyl-2-oxopentanoate + H2O. The protein operates within amino-acid biosynthesis; L-isoleucine biosynthesis; L-isoleucine from 2-oxobutanoate: step 3/4. It participates in amino-acid biosynthesis; L-valine biosynthesis; L-valine from pyruvate: step 3/4. Its function is as follows. Functions in the biosynthesis of branched-chain amino acids. Catalyzes the dehydration of (2R,3R)-2,3-dihydroxy-3-methylpentanoate (2,3-dihydroxy-3-methylvalerate) into 2-oxo-3-methylpentanoate (2-oxo-3-methylvalerate) and of (2R)-2,3-dihydroxy-3-methylbutanoate (2,3-dihydroxyisovalerate) into 2-oxo-3-methylbutanoate (2-oxoisovalerate), the penultimate precursor to L-isoleucine and L-valine, respectively. The protein is Dihydroxy-acid dehydratase of Marinomonas sp. (strain MWYL1).